Here is a 380-residue protein sequence, read N- to C-terminus: Outer membrane protein 40 (380 aa).

Positions 1 to 21 are cleaved as a signal peptide; sequence MKAKSLLLALAGLACTFSATA. Gln-22 is subject to Pyrrolidone carboxylic acid. The OmpA-like domain occupies 270–380; sequence PTVTRVVVDN…NRIVVMTAAE (111 aa).

The protein belongs to the outer membrane OOP (TC 1.B.6) superfamily. In terms of assembly, disulfide-linked heterodimer with Omp41.

The protein resides in the cell outer membrane. In terms of biological role, may have porin activity and function in peptidoglycan binding. In Porphyromonas gingivalis (strain ATCC BAA-308 / W83), this protein is Outer membrane protein 40.